A 581-amino-acid polypeptide reads, in one-letter code: Leucine-rich repeat-containing protein 47 (581 aa).

LRR repeat units follow at residues 78–97 (QLHSLVLRRNALGPGLSPEL), 102–123 (ALRVLDLSGNALETLPPGEGLG), 132–154 (QLQSLNLSGNRLRELPADLARCA), 156–177 (RLQSLNLTGNRLDAFPPELFRP), 182–204 (LLSELAAADNCLRELSPDIAHLA), 205–227 (SLKTLDLSNNQLTEIPAELADCP), and 228–248 (KLKEINFRGNRLRDKRLEKMV). A disordered region spans residues 262-301 (AGGRGGRSKGRQEASEKEDRKKRRERKQHRESGEGEEEVA). Basic and acidic residues predominate over residues 271 to 280 (GRQEASEKED). Residues Ser314, Ser430, and Ser519 each carry the phosphoserine modification. Residues 401–436 (LGRKEAKAKELVRQLQLEAEEQRKQKKRQSVSGLHR) are a coiled coil.

The protein is Leucine-rich repeat-containing protein 47 (Lrrc47) of Mus musculus (Mouse).